Reading from the N-terminus, the 260-residue chain is uncharacterized protein (260 aa).

The first 22 residues, 1–22 (MKSIKRIGLCISLLILIIFATS), serve as a signal peptide directing secretion. Residue C23 is the site of N-palmitoyl cysteine attachment. The S-diacylglycerol cysteine moiety is linked to residue C23.

The protein belongs to the staphylococcal tandem lipoprotein family.

It localises to the cell membrane. This is an uncharacterized protein from Staphylococcus aureus (strain N315).